An 89-amino-acid chain; its full sequence is uncharacterized protein (89 aa).

Residues 39-61 (FVCFWSIWFWTGDISFSLLSMLV) traverse the membrane as a helical segment.

It localises to the membrane. This is an uncharacterized protein from Saccharomyces cerevisiae (strain ATCC 204508 / S288c) (Baker's yeast).